The sequence spans 150 residues: Nucleoside diphosphate kinase (150 aa).

The ATP site is built by K9, F57, R85, T91, R102, and N112. Residue H115 is the Pros-phosphohistidine intermediate of the active site.

The protein belongs to the NDK family. Mg(2+) is required as a cofactor.

The protein resides in the cytoplasm. It carries out the reaction a 2'-deoxyribonucleoside 5'-diphosphate + ATP = a 2'-deoxyribonucleoside 5'-triphosphate + ADP. The enzyme catalyses a ribonucleoside 5'-diphosphate + ATP = a ribonucleoside 5'-triphosphate + ADP. Functionally, major role in the synthesis of nucleoside triphosphates other than ATP. The ATP gamma phosphate is transferred to the NDP beta phosphate via a ping-pong mechanism, using a phosphorylated active-site intermediate. This Methanothermobacter thermautotrophicus (strain ATCC 29096 / DSM 1053 / JCM 10044 / NBRC 100330 / Delta H) (Methanobacterium thermoautotrophicum) protein is Nucleoside diphosphate kinase.